The sequence spans 169 residues: Steroid receptor-associated and regulated protein (169 aa).

As to quaternary structure, interacts with 14-3-3 proteins. As to expression, expressed in breast tumors with a higher expression level in estrogen receptor-positive cancers.

In terms of biological role, may regulate the transcriptional function of androgen and estrogen receptors. This chain is Steroid receptor-associated and regulated protein, found in Homo sapiens (Human).